We begin with the raw amino-acid sequence, 238 residues long: 1-(5-phosphoribosyl)-5-[(5-phosphoribosylamino)methylideneamino] imidazole-4-carboxamide isomerase (238 aa).

The Proton acceptor role is filled by D7. D129 (proton donor) is an active-site residue.

The protein belongs to the HisA/HisF family.

It is found in the cytoplasm. The enzyme catalyses 1-(5-phospho-beta-D-ribosyl)-5-[(5-phospho-beta-D-ribosylamino)methylideneamino]imidazole-4-carboxamide = 5-[(5-phospho-1-deoxy-D-ribulos-1-ylimino)methylamino]-1-(5-phospho-beta-D-ribosyl)imidazole-4-carboxamide. Its pathway is amino-acid biosynthesis; L-histidine biosynthesis; L-histidine from 5-phospho-alpha-D-ribose 1-diphosphate: step 4/9. This chain is 1-(5-phosphoribosyl)-5-[(5-phosphoribosylamino)methylideneamino] imidazole-4-carboxamide isomerase, found in Leuconostoc mesenteroides subsp. mesenteroides (strain ATCC 8293 / DSM 20343 / BCRC 11652 / CCM 1803 / JCM 6124 / NCDO 523 / NBRC 100496 / NCIMB 8023 / NCTC 12954 / NRRL B-1118 / 37Y).